The sequence spans 359 residues: Heat-inducible transcription repressor HrcA (359 aa).

The protein belongs to the HrcA family.

Its function is as follows. Negative regulator of class I heat shock genes (grpE-dnaK-dnaJ and groELS operons). Prevents heat-shock induction of these operons. In Roseiflexus sp. (strain RS-1), this protein is Heat-inducible transcription repressor HrcA.